Consider the following 444-residue polypeptide: Protein EVI2B (444 aa).

Residues methionine 1–threonine 23 form the signal peptide. At glutamate 24–alanine 203 the chain is on the extracellular side. N-linked (GlcNAc...) asparagine glycosylation is found at asparagine 63, asparagine 94, asparagine 104, and asparagine 127. Composition is skewed to polar residues over residues asparagine 104 to glutamine 131 and threonine 160 to isoleucine 171. Residues asparagine 104–histidine 197 are disordered. A compositionally biased stretch (pro residues) spans threonine 177–serine 187. Residues isoleucine 204–isoleucine 224 form a helical membrane-spanning segment. Residues leucine 225 to leucine 444 are Cytoplasmic-facing. Residue threonine 250 is modified to Phosphothreonine. A phosphoserine mark is found at serine 269, serine 272, serine 279, and serine 295. Composition is skewed to polar residues over residues serine 318–serine 332 and serine 361–proline 370. Disordered regions lie at residues serine 318 to aspartate 337 and serine 361 to leucine 444.

As to expression, expressed in myeloid and lymphoid progenitors and increased in mature hematopoietic populations with the highest levels in granulocytes.

It is found in the membrane. In terms of biological role, required for granulocyte differentiation and functionality of hematopoietic progenitor cells through the control of cell cycle progression and survival of hematopoietic progenitor cells. In Mus musculus (Mouse), this protein is Protein EVI2B.